Reading from the N-terminus, the 534-residue chain is Bifunctional pantoate ligase/cytidylate kinase (534 aa).

The segment at 1 to 302 (MRLLTTVAAL…LGSTRLIDNT (302 aa)) is pantoate--beta-alanine ligase. Residue 48 to 55 (MGSLHQGH) coordinates ATP. The active-site Proton donor is histidine 55. Glutamine 79 contacts (R)-pantoate. Glutamine 79 serves as a coordination point for beta-alanine. ATP is bound at residue 172–175 (GQKD). Glutamine 178 serves as a coordination point for (R)-pantoate. Residues valine 201 and 209–212 (CSSR) contribute to the ATP site. A cytidylate kinase region spans residues 303–534 (ILRDRQPIIA…DYYQQRLSQW (232 aa)).

This sequence in the N-terminal section; belongs to the pantothenate synthetase family. The protein in the C-terminal section; belongs to the cytidylate kinase family. Type 1 subfamily.

The protein localises to the cytoplasm. The catalysed reaction is (R)-pantoate + beta-alanine + ATP = (R)-pantothenate + AMP + diphosphate + H(+). It carries out the reaction CMP + ATP = CDP + ADP. The enzyme catalyses dCMP + ATP = dCDP + ADP. Its pathway is cofactor biosynthesis; (R)-pantothenate biosynthesis; (R)-pantothenate from (R)-pantoate and beta-alanine: step 1/1. In terms of biological role, catalyzes the condensation of pantoate with beta-alanine in an ATP-dependent reaction via a pantoyl-adenylate intermediate. Its function is as follows. Catalyzes the transfer of a phosphate group from ATP to either CMP or dCMP to form CDP or dCDP and ADP, respectively. This is Bifunctional pantoate ligase/cytidylate kinase from Trichormus variabilis (strain ATCC 29413 / PCC 7937) (Anabaena variabilis).